Reading from the N-terminus, the 300-residue chain is Homoserine kinase (300 aa).

ATP is bound at residue 86–96 (PVARGLGSSAT).

It belongs to the GHMP kinase family. Homoserine kinase subfamily.

The protein resides in the cytoplasm. The enzyme catalyses L-homoserine + ATP = O-phospho-L-homoserine + ADP + H(+). It participates in amino-acid biosynthesis; L-threonine biosynthesis; L-threonine from L-aspartate: step 4/5. In terms of biological role, catalyzes the ATP-dependent phosphorylation of L-homoserine to L-homoserine phosphate. This Persephonella marina (strain DSM 14350 / EX-H1) protein is Homoserine kinase.